The sequence spans 266 residues: Protein crossbronx-like (266 aa).

Residues 15-178 (KQGYKILAEY…IQELAISSRR (164 aa)) form the UBC core domain. Positions 216-266 (EATCEDDSPPAELLGHIDSSRQLDEDEANQRGKLQAATTDLQHGARCSVAQ) are disordered.

The protein belongs to the ubiquitin-conjugating enzyme family. FTS subfamily.

This is Protein crossbronx-like from Drosophila ananassae (Fruit fly).